The primary structure comprises 297 residues: Small ribosomal subunit protein uS9m (297 aa).

The segment at 278 to 297 (VERKKPGKRKARKMPTWVKR) is disordered.

It belongs to the universal ribosomal protein uS9 family.

The protein resides in the mitochondrion. This chain is Small ribosomal subunit protein uS9m (MRPS9), found in Kluyveromyces lactis (strain ATCC 8585 / CBS 2359 / DSM 70799 / NBRC 1267 / NRRL Y-1140 / WM37) (Yeast).